Here is a 222-residue protein sequence, read N- to C-terminus: Prolactin-3B1 (222 aa).

The signal sequence occupies residues 1-31 (MKLSLSQPCSFSGALLLLAVSNLLVWEKVTS). Disulfide bonds link C82–C197 and C214–C222.

It belongs to the somatotropin/prolactin family.

It localises to the secreted. The protein is Prolactin-3B1 (Prl3b1) of Mus musculus (Mouse).